A 143-amino-acid polypeptide reads, in one-letter code: MRLNSIAPAPGSRPSAKRVGRGIGSGLGKTAGRGHKGQKARAGGYHKVGFEGGQMPLQRRLPKVGFNSRKSLRVAEVRLHELAGLEGTIDLAALIKASVVPAQTLRAKVIASGKLEKAVTLKGVAVTKGAREAIEAAGGKIEE.

A disordered region spans residues Met-1 to Glu-51. Residues Arg-21–Ala-31 are compositionally biased toward gly residues.

The protein belongs to the universal ribosomal protein uL15 family. In terms of assembly, part of the 50S ribosomal subunit.

Binds to the 23S rRNA. This Thioalkalivibrio sulfidiphilus (strain HL-EbGR7) protein is Large ribosomal subunit protein uL15.